The chain runs to 251 residues: Flap endonuclease Xni (251 aa).

Position 104 (Asp-104) interacts with Mg(2+). In terms of domain architecture, 5'-3' exonuclease spans 160 to 249 (VQPQQLPDYW…IDGNLQQLRL (90 aa)). K(+)-binding residues include Leu-171, Ala-172, Pro-180, Val-182, and Ile-185. Residues 184–189 (GIGPKS) form an interaction with DNA region.

This sequence belongs to the Xni family. The cofactor is Mg(2+). K(+) is required as a cofactor.

Its function is as follows. Has flap endonuclease activity. During DNA replication, flap endonucleases cleave the 5'-overhanging flap structure that is generated by displacement synthesis when DNA polymerase encounters the 5'-end of a downstream Okazaki fragment. The chain is Flap endonuclease Xni from Escherichia coli O17:K52:H18 (strain UMN026 / ExPEC).